Here is a 103-residue protein sequence, read N- to C-terminus: Glutaredoxin-C11 (103 aa).

In terms of domain architecture, Glutaredoxin spans 1 to 102; the sequence is MERIRDLSSK…QMLKDAKAIW (102 aa). A disulfide bridge connects residues C21 and C24.

This sequence belongs to the glutaredoxin family. CC-type subfamily.

It localises to the cytoplasm. Has a glutathione-disulfide oxidoreductase activity in the presence of NADPH and glutathione reductase. Reduces low molecular weight disulfides and proteins. This chain is Glutaredoxin-C11 (GRXC11), found in Arabidopsis thaliana (Mouse-ear cress).